Here is a 434-residue protein sequence, read N- to C-terminus: Asparagine--tRNA ligase (434 aa).

The protein belongs to the class-II aminoacyl-tRNA synthetase family. Homodimer.

Its subcellular location is the cytoplasm. It carries out the reaction tRNA(Asn) + L-asparagine + ATP = L-asparaginyl-tRNA(Asn) + AMP + diphosphate + H(+). This chain is Asparagine--tRNA ligase, found in Oenococcus oeni (strain ATCC BAA-331 / PSU-1).